The following is a 435-amino-acid chain: ATP-dependent protease ATPase subunit HslU (435 aa).

Residues Ile18, Gly60 to Glu65, Asp248, Glu313, and Arg385 contribute to the ATP site.

The protein belongs to the ClpX chaperone family. HslU subfamily. A double ring-shaped homohexamer of HslV is capped on each side by a ring-shaped HslU homohexamer. The assembly of the HslU/HslV complex is dependent on binding of ATP.

It localises to the cytoplasm. In terms of biological role, ATPase subunit of a proteasome-like degradation complex; this subunit has chaperone activity. The binding of ATP and its subsequent hydrolysis by HslU are essential for unfolding of protein substrates subsequently hydrolyzed by HslV. HslU recognizes the N-terminal part of its protein substrates and unfolds these before they are guided to HslV for hydrolysis. In Ruegeria pomeroyi (strain ATCC 700808 / DSM 15171 / DSS-3) (Silicibacter pomeroyi), this protein is ATP-dependent protease ATPase subunit HslU.